The sequence spans 360 residues: Nucleoporin SEH1 (360 aa).

6 WD repeats span residues 10-49 (DHKDLIHDVSFDFHGRRMATCSSDQSVKVWDKSENGDWHC), 55-96 (THSG…SNDK), 111-152 (DSRT…NLSQ), 160-210 (SCKL…RKYA), 217-258 (SVSD…KELS), and 276-315 (NHNSQVWRVSWNITGTVLASSGDDGTVRLWKANYMDNWKC).

The protein belongs to the WD repeat SEC13 family. As to quaternary structure, component of the Nup107-160 subcomplex of the nuclear pore complex (NPC). The Nup107-160 subcomplex includes NUP160, NUP133, NUP107, NUP98, NUP85, NUP43, NUP37, SEH1 and SEC13. Component of the GATOR2 subcomplex, composed of MIOS, SEC13, SEH1L, WDR24 and WDR59. The GATOR2 complex interacts with CASTOR1 and CASTOR2; the interaction is negatively regulated by arginine. The GATOR2 complex interacts with SESN1, SESN2 and SESN3; the interaction is negatively regulated by amino acids.

Its subcellular location is the chromosome. The protein resides in the centromere. It is found in the kinetochore. The protein localises to the nucleus. It localises to the nuclear pore complex. Its subcellular location is the lysosome membrane. With respect to regulation, the GATOR2 complex is negatively regulated by the upstream amino acid sensors CASTOR1 and SESN2, which sequester the GATOR2 complex in absence of amino acids. In the presence of abundant amino acids, GATOR2 is released from CASTOR1 and SESN2 and activated. In terms of biological role, component of the Nup107-160 subcomplex of the nuclear pore complex (NPC). The Nup107-160 subcomplex is required for the assembly of a functional NPC. The Nup107-160 subcomplex is also required for normal kinetochore microtubule attachment, mitotic progression and chromosome segregation. This subunit plays a role in recruitment of the Nup107-160 subcomplex to the kinetochore. Its function is as follows. As a component of the GATOR2 complex, functions as an activator of the amino acid-sensing branch of the mTORC1 signaling pathway. The GATOR2 complex indirectly activates mTORC1 through the inhibition of the GATOR1 subcomplex. GATOR2 probably acts as an E3 ubiquitin-protein ligase toward GATOR1. In the presence of abundant amino acids, the GATOR2 complex mediates ubiquitination of the NPRL2 core component of the GATOR1 complex, leading to GATOR1 inactivation. In the absence of amino acids, GATOR2 is inhibited, activating the GATOR1 complex. This Xenopus tropicalis (Western clawed frog) protein is Nucleoporin SEH1 (seh1l).